Consider the following 361-residue polypeptide: Chorismate synthase (361 aa).

Positions 48 and 54 each coordinate NADP(+). FMN is bound by residues R125 to S127, N238 to A239, G278, K293 to S297, and R319.

The protein belongs to the chorismate synthase family. In terms of assembly, homotetramer. Requires FMNH2 as cofactor.

It catalyses the reaction 5-O-(1-carboxyvinyl)-3-phosphoshikimate = chorismate + phosphate. The protein operates within metabolic intermediate biosynthesis; chorismate biosynthesis; chorismate from D-erythrose 4-phosphate and phosphoenolpyruvate: step 7/7. Functionally, catalyzes the anti-1,4-elimination of the C-3 phosphate and the C-6 proR hydrogen from 5-enolpyruvylshikimate-3-phosphate (EPSP) to yield chorismate, which is the branch point compound that serves as the starting substrate for the three terminal pathways of aromatic amino acid biosynthesis. This reaction introduces a second double bond into the aromatic ring system. The protein is Chorismate synthase of Yersinia pseudotuberculosis serotype O:1b (strain IP 31758).